The chain runs to 367 residues: Centromere protein L (367 aa).

It belongs to the CENP-L/IML3 family.

The protein resides in the nucleus. It is found in the chromosome. The protein localises to the centromere. Probable component of a centromeric complex involved in assembly of kinetochore proteins, mitotic progression and chromosome segregation. The protein is Centromere protein L (cenpl) of Danio rerio (Zebrafish).